Here is a 595-residue protein sequence, read N- to C-terminus: MSKVAKYRRQVSEDPDIDSLLSTLSPEEMEELEKELDVVDPDGSIPVGLRQRNQTDKQPSGSFNREAMLNFCEKESKKIIQREMSVDESKQVGRKTDAKNGEDKGSNASRKALGPRQDSDVGKEPKKGVLKKSFSRDREEADSRGSEKPKEEKVIRGIDKGRVRAAVDRKEAGKDGREERAAATTKKEEEKTGSVRNAGLSRDKDKKREEVKEPSKKEEVKLTAENRSTVGRQEDGKQKESREDRDKKPEVKGIGCGSRDSRKEDEKVKKEETQPDKGVREEGKTREKQPPSGPSKPSDGQARAEEEAAPSIFDEPLEKVKNNDPEMTEVNVNNSDCITNEILVRFTEALEFNTVVKVFALANTRADDHVAFAIAIMLKANKTITSLNLDSNHITGKGILAIFRALLQNNTLTELRFHNQRHICGGKTEMEIAKLLKENTTLLKLGYHFELAGPRMTVTNLLSRNMDKQRQKRLQEQKQAQEASGEKKDRLEVPKVGALPKGSPKPSPQPSPKSAPKNSPKKAGVPAAPPPPPPPLAPPLIMENLKNSLSPATQRKMGDKVLPAQEKNSRDQLLAAIRSSNLKQLKKVEVPKLLQ.

Disordered regions lie at residues 1–322 and 467–568; these read MSKV…KVKN and DKQR…QEKN. S12 bears the Phosphoserine mark. Over residues 27–40 the composition is skewed to acidic residues; the sequence is EEMEELEKELDVVD. Basic and acidic residues-rich tracts occupy residues 72-105, 117-127, 134-193, 201-224, 232-251, 259-289, 467-476, and 484-493; these read CEKE…EDKG, QDSDVGKEPKK, FSRD…EKTG, SRDK…KLTA, RQED…KPEV, RDSR…REKQ, DKQRQKRLQE, and SGEKKDRLEV. At S85 the chain carries Phosphoserine. S135 is subject to Phosphoserine. Tandem repeats lie at residues 165 to 180, 181 to 196, 197 to 212, 213 to 227, 228 to 243, 244 to 257, 258 to 273, and 274 to 288. An 8 X approximate tandem repeats region spans residues 165 to 288; it reads AAVDRKEAGK…VREEGKTREK (124 aa). 2 stretches are compositionally biased toward pro residues: residues 503–513 and 527–538; these read SPKPSPQPSPK and AAPPPPPPPLAP. Positions 503–522 are 5 X 4 AA approximate tandem repeats; that stretch reads SPKPSPQPSPKSAPKNSPKK. Phosphoserine is present on S550. In terms of domain architecture, WH2 spans 569-588; it reads SRDQLLAAIRSSNLKQLKKV.

As to expression, detected in smooth muscle, in stomach and uterus, blood vessel wall, and in slow fibers in extraocular muscle, urinary bladder and sternothyroid muscle (at protein level).

It localises to the cytoplasm. Its subcellular location is the myofibril. The protein resides in the sarcomere. The protein localises to the cytoskeleton. Functionally, required for proper contractility of visceral smooth muscle cells. Mediates nucleation of actin filaments. The protein is Leiomodin-1 of Rattus norvegicus (Rat).